Here is a 256-residue protein sequence, read N- to C-terminus: Ubiquinone/menaquinone biosynthesis C-methyltransferase UbiE (256 aa).

S-adenosyl-L-methionine is bound by residues T79, D100, and 128 to 129 (DA).

This sequence belongs to the class I-like SAM-binding methyltransferase superfamily. MenG/UbiE family.

The catalysed reaction is a 2-demethylmenaquinol + S-adenosyl-L-methionine = a menaquinol + S-adenosyl-L-homocysteine + H(+). It carries out the reaction a 2-methoxy-6-(all-trans-polyprenyl)benzene-1,4-diol + S-adenosyl-L-methionine = a 5-methoxy-2-methyl-3-(all-trans-polyprenyl)benzene-1,4-diol + S-adenosyl-L-homocysteine + H(+). It functions in the pathway quinol/quinone metabolism; menaquinone biosynthesis; menaquinol from 1,4-dihydroxy-2-naphthoate: step 2/2. Its pathway is cofactor biosynthesis; ubiquinone biosynthesis. Its function is as follows. Methyltransferase required for the conversion of demethylmenaquinol (DMKH2) to menaquinol (MKH2) and the conversion of 2-polyprenyl-6-methoxy-1,4-benzoquinol (DDMQH2) to 2-polyprenyl-3-methyl-6-methoxy-1,4-benzoquinol (DMQH2). The chain is Ubiquinone/menaquinone biosynthesis C-methyltransferase UbiE from Pseudomonas syringae pv. tomato (strain ATCC BAA-871 / DC3000).